Here is a 507-residue protein sequence, read N- to C-terminus: 3-oxosteroid 1-dehydrogenase (507 aa).

Residue 9 to 38 (DLLVVGSGGGALTGAYTAAAQGLTTIVLEK) participates in FAD binding. The segment at 299-385 (GLVVDSPGSV…LPRPDYRPER (87 aa)) is disordered.

The protein belongs to the FAD-dependent oxidoreductase 2 family. 3-oxosteroid dehydrogenase subfamily. FAD serves as cofactor.

It is found in the cell membrane. It carries out the reaction a 3-oxosteroid + A = a 3-oxo-Delta(1)-steroid + AH2. It functions in the pathway lipid metabolism; steroid degradation. Functionally, catalyzes the elimination of the C-1 and C-2 hydrogen atoms of the A-ring from the polycyclic ring structure of 3-ketosteroids. The polypeptide is 3-oxosteroid 1-dehydrogenase (Rhodococcus opacus (Nocardia opaca)).